The following is a 92-amino-acid chain: MKQVIKAPLITEKNTYHNAAGVYVFEVDLKSSKTEVKAAVEKNFKVKVDSVRTSVCRGHSKQTKFGLTKVAYWKKAYVKLAEGEKIALFEGV.

Belongs to the universal ribosomal protein uL23 family. In terms of assembly, part of the 50S ribosomal subunit. Contacts protein L29, and trigger factor when it is bound to the ribosome.

Functionally, one of the early assembly proteins it binds 23S rRNA. One of the proteins that surrounds the polypeptide exit tunnel on the outside of the ribosome. Forms the main docking site for trigger factor binding to the ribosome. In Bdellovibrio bacteriovorus (strain ATCC 15356 / DSM 50701 / NCIMB 9529 / HD100), this protein is Large ribosomal subunit protein uL23.